The primary structure comprises 924 residues: Ubiquitin carboxyl-terminal hydrolase 15 (924 aa).

Zn(2+) is bound by residues Cys130, Cys133, Cys141, Cys144, Cys150, Cys154, His163, and Cys167. An MYND-type zinc finger spans residues 130–167; the sequence is CARCFGPAKTRCSRCKSVRYCSGKCQIIHWRVAHKDEC. Over residues 226-236 the composition is skewed to polar residues; sequence DITPQINTQGR. Disordered regions lie at residues 226-301 and 317-366; these read DITP…VDSS and SHKH…TSKK. The span at 247 to 256 shows a compositional bias: basic and acidic residues; it reads ANRESCRRDS. Over residues 331–362 the composition is skewed to polar residues; it reads GCPNTQYPSNGTRTATLPRTGINKSGEQSCTE. The USP domain maps to 438–744; the sequence is RGLVNCGNSC…GAYMLFYMRS (307 aa). The active-site Nucleophile is the Cys447. His703 functions as the Proton acceptor in the catalytic mechanism. The disordered stretch occupies residues 750 to 793; sequence RGEHNGKAPVHHSQPRNEMKEQRKPVNRFKPRADHKNTESSSSE. The span at 764-773 shows a compositional bias: basic and acidic residues; it reads PRNEMKEQRK.

This sequence belongs to the peptidase C19 family. In terms of assembly, interacts with DA1. As to expression, highly expressed in rosette leaves and inflorescence. Expressed at low levels in cotyledons, stems, cauline leaves and siliques.

The protein localises to the cytoplasm. It localises to the nucleus. The catalysed reaction is Thiol-dependent hydrolysis of ester, thioester, amide, peptide and isopeptide bonds formed by the C-terminal Gly of ubiquitin (a 76-residue protein attached to proteins as an intracellular targeting signal).. In terms of biological role, recognizes and hydrolyzes the peptide bond at the C-terminal Gly of ubiquitin. Involved in the processing of poly-ubiquitin precursors as well as that of ubiquitinated proteins. Involved in the regulation of organ size. Acts as a positive regulator of cell proliferation. Possesses deubiquitinating enzyme activity in vitro. The enzyme activity of UBP15 is required for its function in regulation of cell proliferation. Functions antagonistically in a common pathway with DA1 to regulate seed size. Acts maternally to regulate seed size by promoting cell proliferation in the integuments of ovules and developing seeds. Functions independently of DA2 and BB. In Arabidopsis thaliana (Mouse-ear cress), this protein is Ubiquitin carboxyl-terminal hydrolase 15.